The sequence spans 368 residues: uncharacterized protein (368 aa).

Residues 156–182 are compositionally biased toward low complexity; that stretch reads SNVNAHNNNNNSNNNNNNNNNSNNNNN. 3 disordered regions span residues 156 to 213, 228 to 259, and 291 to 319; these read SNVN…SSPY, ASTNLSSSSSNNSMHTNPTTATSTSADLINDL, and STTSSSIGTNINPPQHSPSPSQREDFSTA. A compositionally biased stretch (polar residues) spans 183–194; sequence LYNQTQFSTRYF. 2 stretches are compositionally biased toward low complexity: residues 195-213 and 228-240; these read NSNSSPSLTSSTSNSSSPY and ASTNLSSSSSNNS. Composition is skewed to polar residues over residues 241–254 and 297–311; these read MHTNPTTATSTSAD and IGTNINPPQHSPSPS.

This is an uncharacterized protein from Saccharomyces cerevisiae (strain ATCC 204508 / S288c) (Baker's yeast).